The primary structure comprises 267 residues: Protein COFACTOR ASSEMBLY OF COMPLEX C SUBUNIT B CCB1, chloroplastic (267 aa).

A chloroplast-targeting transit peptide spans 1–44 (MATKLISPPLSCPWVTSREVIIKGLPRRRREWMVTKRNRVSAVT). The Lumenal portion of the chain corresponds to 45 to 84 (AMIVEPLSVVSSSAIQIHQWWEQNPNSLLLMTEATGGYSL). A helical transmembrane segment spans residues 85–105 (ASYYTSLGLFVISVPGLWSLI). The Stromal segment spans residues 106–164 (KRSVKSKIVRKTFVVNDVKKEPKQVAGEILSFFTRKNFNITDRGETITFEGKMVPSRGQ). Residues 165–185 (AALLTFCTCISLASVGLVLTI) traverse the membrane as a helical segment. Threonine 186 is a topological domain (lumenal). A helical membrane pass occupies residues 187–207 (VPDFGNNWFFIILLSPLAGVY). Over 208 to 267 (YWKKASRKEEIKVKMMVGSKGRLDEIVVQGDDVQVEEMRKELQLNEKGMVYVKGLFERSS) the chain is Stromal.

The protein resides in the plastid. It localises to the chloroplast thylakoid membrane. Required for the biogenesis and accumulation of native cytochrome b6 in the thylakoid membrane. Controls the conversion of apocytochrome b6 to holocytochrome b6. Required for covalent binding of the c-type heme to cytochrome b6. This Arabidopsis thaliana (Mouse-ear cress) protein is Protein COFACTOR ASSEMBLY OF COMPLEX C SUBUNIT B CCB1, chloroplastic.